Consider the following 427-residue polypeptide: 3-phosphoshikimate 1-carboxyvinyltransferase (427 aa).

K22, S23, and R27 together coordinate 3-phosphoshikimate. Position 22 (K22) interacts with phosphoenolpyruvate. G96 and R124 together coordinate phosphoenolpyruvate. The 3-phosphoshikimate site is built by S170, S171, Q172, S198, D314, N337, and K341. Phosphoenolpyruvate is bound at residue Q172. The active-site Proton acceptor is the D314. The phosphoenolpyruvate site is built by R345, R387, and K412.

Belongs to the EPSP synthase family. Monomer.

Its subcellular location is the cytoplasm. The enzyme catalyses 3-phosphoshikimate + phosphoenolpyruvate = 5-O-(1-carboxyvinyl)-3-phosphoshikimate + phosphate. It functions in the pathway metabolic intermediate biosynthesis; chorismate biosynthesis; chorismate from D-erythrose 4-phosphate and phosphoenolpyruvate: step 6/7. Its function is as follows. Catalyzes the transfer of the enolpyruvyl moiety of phosphoenolpyruvate (PEP) to the 5-hydroxyl of shikimate-3-phosphate (S3P) to produce enolpyruvyl shikimate-3-phosphate and inorganic phosphate. The sequence is that of 3-phosphoshikimate 1-carboxyvinyltransferase from Tolumonas auensis (strain DSM 9187 / NBRC 110442 / TA 4).